The primary structure comprises 338 residues: Ketol-acid reductoisomerase (NADP(+)) (338 aa).

Positions 1 to 181 constitute a KARI N-terminal Rossmann domain; that stretch reads MKVFYDKDAD…GGGRAGIIET (181 aa). Residues 24–27, arginine 47, and serine 52 contribute to the NADP(+) site; that span reads YGSQ. Histidine 107 is an active-site residue. Position 133 (glycine 133) interacts with NADP(+). The region spanning 182-327 is the KARI C-terminal knotted domain; the sequence is NFREETETDL…AKLRAMMPWI (146 aa). Aspartate 190, glutamate 194, glutamate 226, and glutamate 230 together coordinate Mg(2+). Serine 251 is a substrate binding site.

Belongs to the ketol-acid reductoisomerase family. Mg(2+) serves as cofactor.

It catalyses the reaction (2R)-2,3-dihydroxy-3-methylbutanoate + NADP(+) = (2S)-2-acetolactate + NADPH + H(+). The catalysed reaction is (2R,3R)-2,3-dihydroxy-3-methylpentanoate + NADP(+) = (S)-2-ethyl-2-hydroxy-3-oxobutanoate + NADPH + H(+). Its pathway is amino-acid biosynthesis; L-isoleucine biosynthesis; L-isoleucine from 2-oxobutanoate: step 2/4. It functions in the pathway amino-acid biosynthesis; L-valine biosynthesis; L-valine from pyruvate: step 2/4. Involved in the biosynthesis of branched-chain amino acids (BCAA). Catalyzes an alkyl-migration followed by a ketol-acid reduction of (S)-2-acetolactate (S2AL) to yield (R)-2,3-dihydroxy-isovalerate. In the isomerase reaction, S2AL is rearranged via a Mg-dependent methyl migration to produce 3-hydroxy-3-methyl-2-ketobutyrate (HMKB). In the reductase reaction, this 2-ketoacid undergoes a metal-dependent reduction by NADPH to yield (R)-2,3-dihydroxy-isovalerate. This Ralstonia pickettii (strain 12J) protein is Ketol-acid reductoisomerase (NADP(+)).